The sequence spans 360 residues: Mannonate dehydratase (360 aa).

Belongs to the mannonate dehydratase family. The cofactor is Fe(2+). Mn(2+) is required as a cofactor.

It carries out the reaction D-mannonate = 2-dehydro-3-deoxy-D-gluconate + H2O. It functions in the pathway carbohydrate metabolism; pentose and glucuronate interconversion. Its function is as follows. Catalyzes the dehydration of D-mannonate. The protein is Mannonate dehydratase (uxuA) of Thermotoga maritima (strain ATCC 43589 / DSM 3109 / JCM 10099 / NBRC 100826 / MSB8).